The chain runs to 43 residues: Mu-conotoxin-like Cal 12.2c (43 aa).

Residue arginine 1 is a propeptide. 4 disulfide bridges follow: cysteine 4/cysteine 16, cysteine 11/cysteine 24, cysteine 18/cysteine 29, and cysteine 23/cysteine 35. 6'-bromotryptophan is present on tryptophan 31. Proline 36 is modified (4-hydroxyproline). A 6'-bromotryptophan modification is found at tryptophan 40.

Expressed by the venom duct.

Its subcellular location is the secreted. Mu-conotoxins block voltage-gated sodium channels. This toxin reversibly blocks voltage-gated sodium channel in cephalopods, with no alteration in the voltage dependence of sodium conductance or on the kinetics of inactivation. The polypeptide is Mu-conotoxin-like Cal 12.2c (Californiconus californicus (California cone)).